The sequence spans 345 residues: Type II methyltransferase M.AplI (345 aa).

In terms of domain architecture, SAM-dependent MTase C5-type spans 25–325 (LVVLDLFAGC…KSVKMTLENK (301 aa)). Cys-93 is an active-site residue.

This sequence belongs to the class I-like SAM-binding methyltransferase superfamily. C5-methyltransferase family.

The catalysed reaction is a 2'-deoxycytidine in DNA + S-adenosyl-L-methionine = a 5-methyl-2'-deoxycytidine in DNA + S-adenosyl-L-homocysteine + H(+). Its function is as follows. A methylase, recognizes the double-stranded sequence 5'-CTGCAG-3', methylates C-4 on both strands, and protects the DNA from cleavage by the AplI endonuclease. The polypeptide is Type II methyltransferase M.AplI (aplIM) (Arthrospira platensis (strain NIES-39 / UTEX 3086 / IAM M-135) (Spirulina platensis)).